The following is a 1788-amino-acid chain: Glutamine and serine-rich protein 1 (1788 aa).

Positions 1–53 are enriched in low complexity; sequence MDAHYAPAGFAEPPAPPASAATQPAAPAWAYEARVPAAASSPSCSGSSPSLKA. Disordered regions lie at residues 1–69, 472–498, and 532–617; these read MDAH…DVLQ, TRDL…VSQT, and SYSS…SKQD. Composition is skewed to polar residues over residues 60–69, 478–492, 532–569, and 576–594; these read PSQSESDVLQ, VSES…SQGL, SYSS…SAQP, and VQSS…SSIP. Phosphoserine occurs at positions 670 and 940. Residue Thr1003 is modified to Phosphothreonine. Phosphoserine is present on Ser1041. Disordered regions lie at residues 1104-1163 and 1234-1264; these read QPGD…TDVY and IQTT…VSLS. Lys1112 is covalently cross-linked (Glycyl lysine isopeptide (Lys-Gly) (interchain with G-Cter in SUMO2)). The span at 1126–1136 shows a compositional bias: basic and acidic residues; the sequence is PKEKAKGKEQG. Lys1137 is covalently cross-linked (Glycyl lysine isopeptide (Lys-Gly) (interchain with G-Cter in SUMO2)). Residues Ser1262, Ser1281, and Ser1282 each carry the phosphoserine modification. Thr1394 is modified (phosphothreonine). Phosphoserine is present on Ser1401. Positions 1494 to 1588 are disordered; it reads VCSKKPRNKP…DEGFEPPAPS (95 aa). A compositionally biased stretch (low complexity) spans 1510-1537; that stretch reads IPSKPSSISKTSDPPVSKTTTTKTPSTK. Over residues 1545-1561 the composition is skewed to basic and acidic residues; sequence IKAEPPPKKRKKWKEEF. Low complexity predominate over residues 1562 to 1575; it reads SSSQSESSPEVRSS.

Interacts with TET1.

It localises to the chromosome. In terms of biological role, plays an essential role in the protection and maintenance of transcriptional and developmental programs. Protects many bivalent promoters and poised enhancers from hypermethylation, showing a marked preference for these regulatory elements over other types of promoters or enhancers. Mechanistically, cooperates with TET1 and binds to DNA in a common complex to inhibit the binding of DNMT3A/3B and therefore de novo methylation. This Mus musculus (Mouse) protein is Glutamine and serine-rich protein 1.